A 371-amino-acid chain; its full sequence is Polygalacturonase (371 aa).

The first 19 residues, Met-1–Ser-19, serve as a signal peptide directing secretion. Residues Ala-20–Ser-34 constitute a propeptide that is removed on maturation. Cys-38 and Cys-53 are oxidised to a cystine. PbH1 repeat units lie at residues Gly-95–Ala-117, Ser-165–Glu-195, Ser-196–Ser-217, Gly-218–Ser-238, Val-247–Thr-268, Val-276–Gln-298, and Thr-310–Ser-355. Asp-210 serves as the catalytic Proton donor. An intrachain disulfide couples Cys-212 to Cys-228. The active site involves His-232. Asn-249 carries an N-linked (GlcNAc...) asparagine glycan. Disulfide bonds link Cys-338–Cys-343 and Cys-362–Cys-371.

The protein belongs to the glycosyl hydrolase 28 family.

The protein localises to the secreted. It carries out the reaction (1,4-alpha-D-galacturonosyl)n+m + H2O = (1,4-alpha-D-galacturonosyl)n + (1,4-alpha-D-galacturonosyl)m.. The polypeptide is Polygalacturonase (Penicillium janthinellum (Penicillium vitale)).